A 95-amino-acid polypeptide reads, in one-letter code: Co-chaperonin GroES (95 aa).

This sequence belongs to the GroES chaperonin family. In terms of assembly, heptamer of 7 subunits arranged in a ring. Interacts with the chaperonin GroEL.

The protein localises to the cytoplasm. In terms of biological role, together with the chaperonin GroEL, plays an essential role in assisting protein folding. The GroEL-GroES system forms a nano-cage that allows encapsulation of the non-native substrate proteins and provides a physical environment optimized to promote and accelerate protein folding. GroES binds to the apical surface of the GroEL ring, thereby capping the opening of the GroEL channel. The protein is Co-chaperonin GroES of Chlorobium phaeovibrioides (strain DSM 265 / 1930) (Prosthecochloris vibrioformis (strain DSM 265)).